Consider the following 320-residue polypeptide: Phosphatidylserine decarboxylase proenzyme (320 aa).

Catalysis depends on charge relay system; for autoendoproteolytic cleavage activity residues aspartate 90, histidine 147, and serine 254. Serine 254 serves as the catalytic Schiff-base intermediate with substrate; via pyruvic acid; for decarboxylase activity. Serine 254 carries the post-translational modification Pyruvic acid (Ser); by autocatalysis. A disordered region spans residues 290–320 (TAAAEPAPLPEEEIRAEHRASPLVDDKQDQG). A compositionally biased stretch (basic and acidic residues) spans 301–320 (EEIRAEHRASPLVDDKQDQG).

Belongs to the phosphatidylserine decarboxylase family. PSD-B subfamily. Prokaryotic type I sub-subfamily. In terms of assembly, heterodimer of a large membrane-associated beta subunit and a small pyruvoyl-containing alpha subunit. Pyruvate serves as cofactor. In terms of processing, is synthesized initially as an inactive proenzyme. Formation of the active enzyme involves a self-maturation process in which the active site pyruvoyl group is generated from an internal serine residue via an autocatalytic post-translational modification. Two non-identical subunits are generated from the proenzyme in this reaction, and the pyruvate is formed at the N-terminus of the alpha chain, which is derived from the carboxyl end of the proenzyme. The autoendoproteolytic cleavage occurs by a canonical serine protease mechanism, in which the side chain hydroxyl group of the serine supplies its oxygen atom to form the C-terminus of the beta chain, while the remainder of the serine residue undergoes an oxidative deamination to produce ammonia and the pyruvoyl prosthetic group on the alpha chain. During this reaction, the Ser that is part of the protease active site of the proenzyme becomes the pyruvoyl prosthetic group, which constitutes an essential element of the active site of the mature decarboxylase.

Its subcellular location is the cell membrane. It carries out the reaction a 1,2-diacyl-sn-glycero-3-phospho-L-serine + H(+) = a 1,2-diacyl-sn-glycero-3-phosphoethanolamine + CO2. The protein operates within phospholipid metabolism; phosphatidylethanolamine biosynthesis; phosphatidylethanolamine from CDP-diacylglycerol: step 2/2. Functionally, catalyzes the formation of phosphatidylethanolamine (PtdEtn) from phosphatidylserine (PtdSer). The polypeptide is Phosphatidylserine decarboxylase proenzyme (Klebsiella pneumoniae subsp. pneumoniae (strain ATCC 700721 / MGH 78578)).